A 308-amino-acid polypeptide reads, in one-letter code: Uricase-2 (308 aa).

Active-site charge relay system residues include K17 and T63. T63, D64, F165, R182, V237, Q238, and N264 together coordinate urate. The active-site Charge relay system is the H266. Residues 306-308 (SKL) carry the Microbody targeting signal motif.

Belongs to the uricase family. Homotetramer. Expressed predominantly in the uninfected cells of the central tissue of the root nodule. Also expressed in the nodule parenchyma cells and vascular tissue, in the roots, stems and leaves of uninfected adult plants, and in the cotyledons, roots and hypocotyls of developing seedlings. Localized to the metaxylem parenchyma cells and phloem fibers of developing roots.

The protein localises to the peroxisome. It catalyses the reaction urate + O2 + H2O = 5-hydroxyisourate + H2O2. It participates in purine metabolism; urate degradation; (S)-allantoin from urate: step 1/3. Its function is as follows. Catalyzes the oxidation of uric acid to 5-hydroxyisourate, which is further processed to form (S)-allantoin. This is Uricase-2 (URIII) from Phaseolus vulgaris (Kidney bean).